Here is a 317-residue protein sequence, read N- to C-terminus: Ornithine carbamoyltransferase (317 aa).

Carbamoyl phosphate contacts are provided by residues 57-60, glutamine 84, arginine 108, and 135-138; these read STRT and HPCQ. L-ornithine is bound by residues asparagine 166, aspartate 230, and 234–235; that span reads SM. Residues 270-271 and arginine 298 each bind carbamoyl phosphate; that span reads CL.

Belongs to the aspartate/ornithine carbamoyltransferase superfamily. OTCase family. In terms of assembly, homododecamer.

The protein localises to the cytoplasm. The catalysed reaction is carbamoyl phosphate + L-ornithine = L-citrulline + phosphate + H(+). The protein operates within amino-acid biosynthesis; L-arginine biosynthesis; L-arginine from L-ornithine and carbamoyl phosphate: step 1/3. Its function is as follows. Reversibly catalyzes the transfer of the carbamoyl group from carbamoyl phosphate (CP) to the N(epsilon) atom of ornithine (ORN) to produce L-citrulline. The protein is Ornithine carbamoyltransferase of Pyrococcus abyssi (strain GE5 / Orsay).